A 673-amino-acid chain; its full sequence is Potassium voltage-gated channel subfamily KQT member 1 (673 aa).

Disordered regions lie at residues 1-28 and 61-80; these read MAAA…RGSA and GPSS…LGPR. Residues 1–118 are Cytoplasmic-facing; that stretch reads MAAATSPPRA…YNFLERPTGW (118 aa). At S27 the chain carries Phosphoserine. Residues 66–75 show a composition bias toward low complexity; it reads AAPAASPAAA. Residues 119–140 traverse the membrane as a helical segment; that stretch reads KCFVYHFAVFLIVLVCLIFSVL. Residues 141-151 are Extracellular-facing; the sequence is STIEQYVALAT. A helical membrane pass occupies residues 152 to 174; sequence GTLFWMEIVLVVFFGTEYAVRLW. Residues 175-190 lie on the Cytoplasmic side of the membrane; that stretch reads SAGCRSKYVGIWGRLR. A helical membrane pass occupies residues 191 to 216; it reads FARKPISIIDLIVVVASMVVLCVGSK. The Extracellular portion of the chain corresponds to 217 to 224; the sequence is GQVFATSA. A helical; Voltage-sensor transmembrane segment spans residues 225 to 240; sequence IRGIRFLQILRMLHVD. Positions 236-244 are interaction with KCNE3; it reads MLHVDRQGG. Topologically, residues 241–258 are cytoplasmic; sequence RQGGTWRLLGSVVFIHRQ. Q242 is a binding site for a 1,2-diacyl-sn-glycero-3-phospho-(1D-myo-inositol-4,5-bisphosphate). A helical transmembrane segment spans residues 259–281; that stretch reads ELITTLYIGFLGLIFSSYFVYLA. Residues 282–297 are Extracellular-facing; that stretch reads EKDAVNESGQVEFGSY. An N-linked (GlcNAc...) asparagine glycan is attached at N287. Positions 298-318 form an intramembrane region, pore-forming; the sequence is ADALWWGVVTVTTIGYGDKVP. Topologically, residues 319–320 are extracellular; sequence QT. Residues 321–346 form a helical membrane-spanning segment; that stretch reads WVGKTIASCFSVFAISFFALPAGILG. Residues 347 to 673 are Cytoplasmic-facing; the sequence is SGFALKVQQK…VPGRGPEEGS (327 aa). Positions 368 to 380 are interaction with CALM; the sequence is AAASLIQTAWRCY. A phosphoserine mark is found at S405 and S407. Positions 514–528 are interaction with CALM; calcium-dependent; that stretch reads KVIRRMQYFVAKKKF. Residues 534–571 form an interaction with KCNE1 C-terminus region; it reads PYDVRDVIEQYSQGHLNLMVRIKELQRRLDQSIGRPAL. An interaction with AKAP9 region spans residues 587–615; sequence IGARLNRVEDKVTQLDQRLELITDMLQQL. Residues 588-619 form a C-terminal assembly domain (tetramerization) region; the sequence is GARLNRVEDKVTQLDQRLELITDMLQQLLSLH. The interval 619–673 is disordered; the sequence is HRGGTPGSRAPGGGGAQVAQPCSGGSINPELFLPSNALPTYEQLTVPGRGPEEGS. The segment covering 622–634 has biased composition (gly residues); that stretch reads GTPGSRAPGGGGA.

It belongs to the potassium channel family. KQT (TC 1.A.1.15) subfamily. Kv7.1/KCNQ1 sub-subfamily. In terms of assembly, tetramer. Heterotetramer with KCNE1; targets to the membrane raft. Interacts (via C-terminus) with CALM; forms a heterooctameric structure (with 4:4 KCNQ1:CALM stoichiometry) in a calcium-independent manner. Interacts with AKAP9; targets protein kinase A (PKA) catalytic and regulatory subunits and protein phosphatase 1 (PP1) to the KCNQ1-KCNE1 complex, allowing PKA-mediated phosphorylation and increase of delayed rectifier potassium channel activity. Interacts with KCNE2; form a heterooligomer complex that targets to the membrane raft and leading to currents with an apparently instantaneous activation, a rapid deactivation process and a linear current-voltage relationship and decreases the amplitude of the outward current. Interacts with AP2M1; mediates estrogen-induced internalization via clathrin-coated vesicles. Interacts with NEDD4L; promotes internalization and decreases I(Ks) currents. Interacts with USP2; counteracts the NEDD4L-specific down-regulation of I(Ks) and restore plasma membrane localization. Heterotetramer with KCNQ5; has a voltage-gated potassium channel activity. Interacts with KCNE3; four KCNE3 molecules are bound to one KCNQ1 tetramer (4:4 KCNQ1:KCNE3 stoichiometry); alters membrane raft localization; affects KCNQ1 structure and gating properties. Interacts with KCNE4; impairs KCNQ1 localization in lipid rafts and inhibits voltage-gated potassium channel activity. Interacts with KCNE5; impairs KCNQ1 localization in lipid rafts and only conducts current upon strong and continued depolarization. Interacts with SLC5A3; forms coregulatory channel-transporter complexes that modulate Na(+)-coupled myo-inositol influx through the transporter. Post-translationally, ubiquitinated by NEDD4L; promotes internalization. The ubiquitinylated form is internalized through a clathrin-mediated endocytosis by interacting with AP2M1 and is recycled back to the cell membrane via RAB4A and RAB11A. Deubiquitinated by USP2; counteracts the NEDD4L-specific down-regulation of I(Ks) and restores the membrane localization.

The protein resides in the cell membrane. Its subcellular location is the cytoplasmic vesicle membrane. It is found in the early endosome. The protein localises to the membrane raft. It localises to the endoplasmic reticulum. The protein resides in the basolateral cell membrane. Its subcellular location is the apical cell membrane. It carries out the reaction K(+)(in) = K(+)(out). With respect to regulation, PIP2 molecule is essential to activate KCNQ channels by inducing the coupling of the voltage-sensing domain (VSD) and the pore-forming domain (PD). Upon channel activation, PIP2 disrupts the VSD-calmodulin/CALM interactions, causing the release of CALM from the VSD which triggers the opening of the gate. Calcium potentiates KCNQ1 channel current through calcium-bound CALM. Calcium-bound CALM competes with PIP2 to stabilize the channel open state. Its function is as follows. Pore-forming subunit of the voltage-gated potassium (Kv) channel involved in the regulation of cardiomyocyte excitability and important in normal development and functions of myocardium, inner ear, stomach and colon. Associates with KCNE beta subunits that modulates current kinetics. Induces a voltage-dependent by rapidly activating and slowly deactivating potassium-selective outward current. Also promotes a delayed voltage activated potassium current showing outward rectification characteristic. During beta-adrenergic receptor stimulation participates in cardiac repolarization by associating with KCNE1 to form the I(Ks) cardiac potassium current that increases the amplitude and slows down the activation kinetics of outward potassium current I(Ks). Muscarinic agonist oxotremorine-M strongly suppresses KCNQ1/KCNE1 current. When associated with KCNE3, forms the potassium channel that is important for cyclic AMP-stimulated intestinal secretion of chloride ions. This interaction with KCNE3 is reduced by 17beta-estradiol, resulting in the reduction of currents. During conditions of increased substrate load, maintains the driving force for proximal tubular and intestinal sodium ions absorption, gastric acid secretion, and cAMP-induced jejunal chloride ions secretion. Allows the provision of potassium ions to the luminal membrane of the secretory canaliculus in the resting state as well as during stimulated acid secretion. When associated with KCNE2, forms a heterooligomer complex leading to currents with an apparently instantaneous activation, a rapid deactivation process and a linear current-voltage relationship and decreases the amplitude of the outward current. When associated with KCNE4, inhibits voltage-gated potassium channel activity. When associated with KCNE5, this complex only conducts current upon strong and continued depolarization. Also forms a heterotetramer with KCNQ5 that has a voltage-gated potassium channel activity. Binds with phosphatidylinositol 4,5-bisphosphate. KCNQ1-KCNE2 channel associates with Na(+)-coupled myo-inositol symporter in the apical membrane of choroid plexus epithelium and regulates the myo-inositol gradient between blood and cerebrospinal fluid with an impact on neuron excitability. The chain is Potassium voltage-gated channel subfamily KQT member 1 from Sus scrofa (Pig).